We begin with the raw amino-acid sequence, 294 residues long: Phosphoribosylaminoimidazole-succinocarboxamide synthase (294 aa).

The protein belongs to the SAICAR synthetase family.

The enzyme catalyses 5-amino-1-(5-phospho-D-ribosyl)imidazole-4-carboxylate + L-aspartate + ATP = (2S)-2-[5-amino-1-(5-phospho-beta-D-ribosyl)imidazole-4-carboxamido]succinate + ADP + phosphate + 2 H(+). It participates in purine metabolism; IMP biosynthesis via de novo pathway; 5-amino-1-(5-phospho-D-ribosyl)imidazole-4-carboxamide from 5-amino-1-(5-phospho-D-ribosyl)imidazole-4-carboxylate: step 1/2. This chain is Phosphoribosylaminoimidazole-succinocarboxamide synthase, found in Thermoplasma acidophilum (strain ATCC 25905 / DSM 1728 / JCM 9062 / NBRC 15155 / AMRC-C165).